The primary structure comprises 398 residues: uncharacterized protein (398 aa).

The segment at 313-398 (KTIKSSGSKT…TSKSIKYYEV (86 aa)) is disordered. Composition is skewed to low complexity over residues 314-333 (TIKSSGSKTSKSIGSKTNKS) and 343-398 (GSKT…YYEV).

This is an uncharacterized protein from Acanthamoeba polyphaga mimivirus (APMV).